The sequence spans 290 residues: Phosphatidylglycerol--prolipoprotein diacylglyceryl transferase (290 aa).

7 helical membrane passes run 21 to 41, 60 to 80, 96 to 116, 130 to 150, 198 to 218, 225 to 245, and 258 to 278; these read VSLH…MWLA, LLYA…VLFY, WDGG…MFWF, FIAP…FING, SQLY…NLFI, GAVS…VEAF, and VISM…IMMI. R143 contacts a 1,2-diacyl-sn-glycero-3-phospho-(1'-sn-glycerol).

The protein belongs to the Lgt family.

The protein resides in the cell inner membrane. It carries out the reaction L-cysteinyl-[prolipoprotein] + a 1,2-diacyl-sn-glycero-3-phospho-(1'-sn-glycerol) = an S-1,2-diacyl-sn-glyceryl-L-cysteinyl-[prolipoprotein] + sn-glycerol 1-phosphate + H(+). It participates in protein modification; lipoprotein biosynthesis (diacylglyceryl transfer). Functionally, catalyzes the transfer of the diacylglyceryl group from phosphatidylglycerol to the sulfhydryl group of the N-terminal cysteine of a prolipoprotein, the first step in the formation of mature lipoproteins. In Serratia proteamaculans (strain 568), this protein is Phosphatidylglycerol--prolipoprotein diacylglyceryl transferase.